The chain runs to 88 residues: UPF0250 protein Sputcn32_2874 (88 aa).

It belongs to the UPF0250 family.

The sequence is that of UPF0250 protein Sputcn32_2874 from Shewanella putrefaciens (strain CN-32 / ATCC BAA-453).